The chain runs to 230 residues: UPF0173 metal-dependent hydrolase Rsph17029_0942 (230 aa).

Belongs to the UPF0173 family.

The polypeptide is UPF0173 metal-dependent hydrolase Rsph17029_0942 (Cereibacter sphaeroides (strain ATCC 17029 / ATH 2.4.9) (Rhodobacter sphaeroides)).